Consider the following 271-residue polypeptide: Protein PXR1 (271 aa).

Residues 25 to 72 (TSRFGHQFLEKFGWKPGMGLGLYPMNSNTSHIKVSIKDDNVGLGAKLK) enclose the G-patch domain. A disordered region spans residues 147–239 (SNAKKRKREG…SASNIPDAVN (93 aa)). Over residues 157–168 (DDSEDEDDDDKE) the composition is skewed to acidic residues. The span at 175 to 203 (KKHKKHKKHKKDKKKDKKDKKEHKKHKKE) shows a compositional bias: basic residues. Basic and acidic residues predominate over residues 204-221 (EKRLKKEKRAEKTKETKK). Residue serine 230 is modified to Phosphoserine.

It belongs to the PINX1 family. In terms of assembly, interacts with EST2.

It is found in the nucleus. Its subcellular location is the nucleolus. Functionally, involved in rRNA-processing at A0, A1 and A2 sites through its action in U18 and U24 snoRNA 3'-end final trimming. Negative regulator of telomerase throughX competition for binding to EST2 with TLC1. The polypeptide is Protein PXR1 (PXR1) (Saccharomyces cerevisiae (strain YJM789) (Baker's yeast)).